The primary structure comprises 422 residues: Cytochrome P-450 monooxygenase DoxA (422 aa).

Cys369 lines the heme pocket.

Belongs to the cytochrome P450 family. Monomer. Requires heme as cofactor.

It localises to the cytoplasm. The catalysed reaction is 13-deoxydaunorubicin + NADPH + O2 + H(+) = 13-dihydrodaunorubicin + NADP(+) + H2O. It catalyses the reaction 13-dihydrodaunorubicin + NADPH + O2 + H(+) = daunorubicin + NADP(+) + 2 H2O. It carries out the reaction 13-deoxycarminomycin + NADPH + O2 + H(+) = 13-dihydrocarminomycin + NADP(+) + H2O. The enzyme catalyses 13-dihydrocarminomycin + NADPH + O2 + H(+) = carminomycin + NADP(+) + 2 H2O. Its pathway is antibiotic biosynthesis; daunorubicin biosynthesis. It participates in antibiotic biosynthesis; carminomycin biosynthesis. Strongly inhibited by dithiothreitol and high ionic strength buffers. Functionally, involved in the biosynthesis of the anthracyclines carminomycin and daunorubicin (daunomycin) which are aromatic polyketide antibiotics that exhibit high cytotoxicity and are widely applied in the chemotherapy of a variety of cancers. In vivo, DoxA catalyzes the C-13 hydroxylation of 13-deoxycarminomycin and 13-deoxydaunorubicin to yield 13-dihydrocarminomycin and 13-dihydrodaunorubicin, respectively, as well as the oxidation of these 13-dihydro-anthracyclines to their respective 13-keto forms, carminomycin and daunorubicin. In vitro, it also catalyzes the C-14 hydroxylation of daunorubicin to form doxorubicin (adriamycin), although this strain is not a doxorubicin producer. It is not able to accept anthracyclinones (aglycones) and anthracyclines with a 10-carbomethoxyl moiety. 13-oxidation of the anthracyclines possessing the 4-methoxy substitution is greatly favored. The anthracycline analog desacetyladriamycin can be oxidized to 10-hydroxydesacetyladriamycin. It can only use NADP. DoxA acts jointly with DauV. The chain is Cytochrome P-450 monooxygenase DoxA (doxA) from Streptomyces sp. (strain C5).